A 1374-amino-acid chain; its full sequence is Y' element ATP-dependent helicase YML133C (1374 aa).

One can recognise a Helicase ATP-binding domain in the interval 375–552 (EIYMADTPSV…LQRIGLTGLA (178 aa)). Residue 388-395 (APPGYGKT) participates in ATP binding. Residues 609 to 758 (KLLLALFEIE…EFYGLESKKG (150 aa)) enclose the Helicase C-terminal domain. The span at 832-975 (ANASTNATTN…ATTTESTNAS (144 aa)) shows a compositional bias: low complexity. Residues 832–999 (ANASTNATTN…RFHPVTDINK (168 aa)) form a disordered region. Positions 976–999 (AKEDANKDGNAEDNRFHPVTDINK) are enriched in basic and acidic residues.

The protein belongs to the helicase family. Yeast subtelomeric Y' repeat subfamily.

Its function is as follows. Catalyzes DNA unwinding and is involved in telomerase-independent telomere maintenance. The chain is Y' element ATP-dependent helicase YML133C from Saccharomyces cerevisiae (strain ATCC 204508 / S288c) (Baker's yeast).